The primary structure comprises 162 residues: Protein-export protein SecB (162 aa).

This sequence belongs to the SecB family. In terms of assembly, homotetramer, a dimer of dimers. One homotetramer interacts with 1 SecA dimer.

The protein localises to the cytoplasm. In terms of biological role, one of the proteins required for the normal export of preproteins out of the cell cytoplasm. It is a molecular chaperone that binds to a subset of precursor proteins, maintaining them in a translocation-competent state. It also specifically binds to its receptor SecA. The chain is Protein-export protein SecB from Hamiltonella defensa subsp. Acyrthosiphon pisum (strain 5AT).